We begin with the raw amino-acid sequence, 72 residues long: Translation initiation factor IF-1 (72 aa).

One can recognise an S1-like domain in the interval 1 to 72 (MAKDDVIEVD…DKGRITFRYK (72 aa)).

It belongs to the IF-1 family. Component of the 30S ribosomal translation pre-initiation complex which assembles on the 30S ribosome in the order IF-2 and IF-3, IF-1 and N-formylmethionyl-tRNA(fMet); mRNA recruitment can occur at any time during PIC assembly.

The protein localises to the cytoplasm. Functionally, one of the essential components for the initiation of protein synthesis. Stabilizes the binding of IF-2 and IF-3 on the 30S subunit to which N-formylmethionyl-tRNA(fMet) subsequently binds. Helps modulate mRNA selection, yielding the 30S pre-initiation complex (PIC). Upon addition of the 50S ribosomal subunit IF-1, IF-2 and IF-3 are released leaving the mature 70S translation initiation complex. The polypeptide is Translation initiation factor IF-1 (Nitratiruptor sp. (strain SB155-2)).